The primary structure comprises 541 residues: Glucose-6-phosphate isomerase (541 aa).

The active-site Proton donor is Glu-346. Residues His-377 and Lys-506 contribute to the active site.

This sequence belongs to the GPI family.

Its subcellular location is the cytoplasm. It carries out the reaction alpha-D-glucose 6-phosphate = beta-D-fructose 6-phosphate. It participates in carbohydrate biosynthesis; gluconeogenesis. It functions in the pathway carbohydrate degradation; glycolysis; D-glyceraldehyde 3-phosphate and glycerone phosphate from D-glucose: step 2/4. Functionally, catalyzes the reversible isomerization of glucose-6-phosphate to fructose-6-phosphate. This is Glucose-6-phosphate isomerase from Rhizobium etli (strain CIAT 652).